The chain runs to 95 residues: Small ribosomal subunit protein bS20 (95 aa).

The protein belongs to the bacterial ribosomal protein bS20 family.

Binds directly to 16S ribosomal RNA. The polypeptide is Small ribosomal subunit protein bS20 (Ehrlichia ruminantium (strain Gardel)).